The sequence spans 230 residues: Ribose-5-phosphate isomerase A (230 aa).

Substrate contacts are provided by residues 31–34 (TGST), 88–91 (DGSD), and 101–104 (KGGG). Glu110 (proton acceptor) is an active-site residue. Substrate is bound at residue Lys128.

It belongs to the ribose 5-phosphate isomerase family. As to quaternary structure, homodimer.

It carries out the reaction aldehydo-D-ribose 5-phosphate = D-ribulose 5-phosphate. It functions in the pathway carbohydrate degradation; pentose phosphate pathway; D-ribose 5-phosphate from D-ribulose 5-phosphate (non-oxidative stage): step 1/1. In terms of biological role, catalyzes the reversible conversion of ribose-5-phosphate to ribulose 5-phosphate. This Lactobacillus acidophilus (strain ATCC 700396 / NCK56 / N2 / NCFM) protein is Ribose-5-phosphate isomerase A.